The primary structure comprises 156 residues: MALYLVIRLRGQPDRRPEEEKALELLRLHKVYHAVLVKDDPSIKGMLERTLSSAVTWGEINKETLVELLKRRGRITGNKRLTEEYLKKIGFNSFEELAEALISGKVSLEDLPGVKPVFRLRPPSGGFRGTIRRNINARGELGYRGADINNLVLRML.

Belongs to the universal ribosomal protein uL30 family. As to quaternary structure, part of the 50S ribosomal subunit.

This Thermofilum pendens (strain DSM 2475 / Hrk 5) protein is Large ribosomal subunit protein uL30.